Reading from the N-terminus, the 83-residue chain is UPF0512 protein W (83 aa).

This sequence belongs to the UPF0512 family.

This Dictyostelium discoideum (Social amoeba) protein is UPF0512 protein W.